Consider the following 248-residue polypeptide: Ubiquinone/menaquinone biosynthesis C-methyltransferase UbiE (248 aa).

Residues Ser-68 and Asp-92 each contribute to the S-adenosyl-L-methionine site.

Belongs to the class I-like SAM-binding methyltransferase superfamily. MenG/UbiE family.

The enzyme catalyses a 2-demethylmenaquinol + S-adenosyl-L-methionine = a menaquinol + S-adenosyl-L-homocysteine + H(+). It carries out the reaction a 2-methoxy-6-(all-trans-polyprenyl)benzene-1,4-diol + S-adenosyl-L-methionine = a 5-methoxy-2-methyl-3-(all-trans-polyprenyl)benzene-1,4-diol + S-adenosyl-L-homocysteine + H(+). The protein operates within quinol/quinone metabolism; menaquinone biosynthesis; menaquinol from 1,4-dihydroxy-2-naphthoate: step 2/2. It functions in the pathway cofactor biosynthesis; ubiquinone biosynthesis. In terms of biological role, methyltransferase required for the conversion of demethylmenaquinol (DMKH2) to menaquinol (MKH2) and the conversion of 2-polyprenyl-6-methoxy-1,4-benzoquinol (DDMQH2) to 2-polyprenyl-3-methyl-6-methoxy-1,4-benzoquinol (DMQH2). The chain is Ubiquinone/menaquinone biosynthesis C-methyltransferase UbiE from Rickettsia conorii (strain ATCC VR-613 / Malish 7).